The following is a 478-amino-acid chain: Chromosomal replication initiator protein DnaA (478 aa).

The domain I, interacts with DnaA modulators stretch occupies residues 1–71; sequence MNLTHIWKTT…RNALTRVVGY (71 aa). The tract at residues 71-136 is domain II; that stretch reads YPVQVQVLIA…LDLASAMRSG (66 aa). Residues 137–353 form a domain III, AAA+ region region; the sequence is MLNPRYTFAS…GSLNRVAAYA (217 aa). The ATP site is built by Gly181, Gly183, Lys184, and Thr185. The domain IV, binds dsDNA stretch occupies residues 354-478; sequence ELNRLPITID…RERIQMMRGL (125 aa).

Belongs to the DnaA family. As to quaternary structure, oligomerizes as a right-handed, spiral filament on DNA at oriC.

It localises to the cytoplasm. Its function is as follows. Plays an essential role in the initiation and regulation of chromosomal replication. ATP-DnaA binds to the origin of replication (oriC) to initiate formation of the DNA replication initiation complex once per cell cycle. Binds the DnaA box (a 9 base pair repeat at the origin) and separates the double-stranded (ds)DNA. Forms a right-handed helical filament on oriC DNA; dsDNA binds to the exterior of the filament while single-stranded (ss)DNA is stabiized in the filament's interior. The ATP-DnaA-oriC complex binds and stabilizes one strand of the AT-rich DNA unwinding element (DUE), permitting loading of DNA polymerase. After initiation quickly degrades to an ADP-DnaA complex that is not apt for DNA replication. Binds acidic phospholipids. The polypeptide is Chromosomal replication initiator protein DnaA (Chloroflexus aggregans (strain MD-66 / DSM 9485)).